A 497-amino-acid polypeptide reads, in one-letter code: Signal recognition particle subunit SRP54 2 (497 aa).

The segment at 1-297 (MVLAELGGRI…DAKPFVSRLL (297 aa)) is G-domain. GTP is bound by residues 108 to 117 (GLQGEVLEKP), 192 to 196 (DTSGR), and 250 to 253 (TKMD). The tract at residues 298-497 (GNGDMSGFVN…LMGMFGGRDE (200 aa)) is M-domain.

Belongs to the GTP-binding SRP family. SRP54 subfamily. As to quaternary structure, component of a signal recognition particle (SRP) complex that consists of a 7SL RNA molecule of 300 nucleotides and six protein subunits: SRP72, SRP68, SRP54, SRP19, SRP14 and SRP9.

It is found in the cytoplasm. It localises to the endoplasmic reticulum. It carries out the reaction GTP + H2O = GDP + phosphate + H(+). Component of the signal recognition particle (SRP) complex, a ribonucleoprotein complex that mediates the cotranslational targeting of secretory and membrane proteins to the endoplasmic reticulum (ER). As part of the SRP complex, associates with the SRP receptor (SR) component SRPRA to target secretory proteins to the endoplasmic reticulum membrane. Binds to the signal sequence of presecretory proteins when they emerge from the ribosomes. Displays basal GTPase activity, and stimulates reciprocal GTPase activation of the SR subunit SRPRA. Forms a guanosine 5'-triphosphate (GTP)-dependent complex with the SR subunit SRPRA. SR compaction and GTPase mediated rearrangement of SR drive SRP-mediated cotranslational protein translocation into the ER. Requires the presence of SRP9/SRP14 and/or SRP19 to stably interact with RNA. This is Signal recognition particle subunit SRP54 2 (SRP-54B) from Arabidopsis thaliana (Mouse-ear cress).